The chain runs to 312 residues: Ribonuclease HIII (312 aa).

The RNase H type-2 domain occupies 95 to 311; it reads FNCIGSDEAG…REKAQKILKP (217 aa). A divalent metal cation-binding residues include aspartate 101, glutamate 102, and aspartate 206.

This sequence belongs to the RNase HII family. RnhC subfamily. Mn(2+) is required as a cofactor. Requires Mg(2+) as cofactor.

Its subcellular location is the cytoplasm. It carries out the reaction Endonucleolytic cleavage to 5'-phosphomonoester.. Its function is as follows. Endonuclease that specifically degrades the RNA of RNA-DNA hybrids. The chain is Ribonuclease HIII from Staphylococcus aureus (strain USA300).